The primary structure comprises 607 residues: Heterocyst differentiation ATP-binding protein HepA (607 aa).

The region spanning 32–330 (AILAVIFSFL…INGTVAFLST (299 aa)) is the ABC transmembrane type-1 domain. The next 5 membrane-spanning stretches (helical) occupy residues 33–53 (ILAVIFSFLAASFEGVSIGFL), 77–97 (ILAADAWPIPPIYRISLLILL), 163–182 (FSGLAFVLTRIMTVCVYFVV), 186–208 (ISWQLSIISVLIFLLLAVGLSTL), and 290–310 (IVISFATFTLPVASLLTFFFV). An ABC transporter domain is found at 364–598 (IDLVSVDFGY…RGKLWKYHQM (235 aa)). ATP is bound at residue 397 to 404 (GASGAGKT).

Belongs to the ABC transporter superfamily.

The protein resides in the cell inner membrane. Acts early in the process of morphological differentiation of heterocysts. The sequence is that of Heterocyst differentiation ATP-binding protein HepA (hepA) from Nostoc sp. (strain PCC 7120 / SAG 25.82 / UTEX 2576).